A 288-amino-acid chain; its full sequence is 33 kDa chaperonin (288 aa).

Cystine bridges form between C237–C239 and C270–C273.

This sequence belongs to the HSP33 family. Post-translationally, under oxidizing conditions two disulfide bonds are formed involving the reactive cysteines. Under reducing conditions zinc is bound to the reactive cysteines and the protein is inactive.

The protein resides in the cytoplasm. In terms of biological role, redox regulated molecular chaperone. Protects both thermally unfolding and oxidatively damaged proteins from irreversible aggregation. Plays an important role in the bacterial defense system toward oxidative stress. In Agathobacter rectalis (strain ATCC 33656 / DSM 3377 / JCM 17463 / KCTC 5835 / VPI 0990) (Eubacterium rectale), this protein is 33 kDa chaperonin.